A 136-amino-acid chain; its full sequence is Large ribosomal subunit protein eL27B (136 aa).

This sequence belongs to the eukaryotic ribosomal protein eL27 family. Component of the large ribosomal subunit (LSU). Mature yeast ribosomes consist of a small (40S) and a large (60S) subunit. The 40S small subunit contains 1 molecule of ribosomal RNA (18S rRNA) and 33 different proteins (encoded by 57 genes). The large 60S subunit contains 3 rRNA molecules (25S, 5.8S and 5S rRNA) and 46 different proteins (encoded by 81 genes).

It localises to the cytoplasm. In terms of biological role, component of the ribosome, a large ribonucleoprotein complex responsible for the synthesis of proteins in the cell. The small ribosomal subunit (SSU) binds messenger RNAs (mRNAs) and translates the encoded message by selecting cognate aminoacyl-transfer RNA (tRNA) molecules. The large subunit (LSU) contains the ribosomal catalytic site termed the peptidyl transferase center (PTC), which catalyzes the formation of peptide bonds, thereby polymerizing the amino acids delivered by tRNAs into a polypeptide chain. The nascent polypeptides leave the ribosome through a tunnel in the LSU and interact with protein factors that function in enzymatic processing, targeting, and the membrane insertion of nascent chains at the exit of the ribosomal tunnel. The polypeptide is Large ribosomal subunit protein eL27B (Saccharomyces cerevisiae (strain ATCC 204508 / S288c) (Baker's yeast)).